The following is a 579-amino-acid chain: Probable methyl-accepting chemotaxis protein BT9727_0355 (579 aa).

Over 1–13 the chain is Cytoplasmic; that stretch reads MKKYWHKLSFLQK. A helical transmembrane segment spans residues 14 to 34; the sequence is NVLLTVLVILTLVGTMGALSF. Topologically, residues 35–198 are extracellular; it reads NMFQNSMMSI…ASIVPSTKEK (164 aa). Residues 199–219 form a helical membrane-spanning segment; that stretch reads FIIQGLMFICISVLIATVIQF. At 220–579 the chain is on the cytoplasmic side; that stretch reads LIVRNALAPL…LQELIGEFKS (360 aa). The 52-residue stretch at 223 to 274 folds into the HAMP domain; it reads RNALAPLRDLREGLRRVGEGDLNIKLEERSDDIGIINSYFNNTIEKFKGIID. Glu-289 is modified (glutamate methyl ester (Glu)). The Methyl-accepting transducer domain occupies 293–529; the sequence is STKENSMAVQ…NIVRVVNELS (237 aa). Residue Glu-548 is modified to Glutamate methyl ester (Glu).

Belongs to the methyl-accepting chemotaxis (MCP) protein family.

The protein localises to the cell membrane. Its function is as follows. Chemotactic-signal transducers respond to changes in the concentration of attractants and repellents in the environment, transduce a signal from the outside to the inside of the cell, and facilitate sensory adaptation through the variation of the level of methylation. This chain is Probable methyl-accepting chemotaxis protein BT9727_0355, found in Bacillus thuringiensis subsp. konkukian (strain 97-27).